The following is a 125-amino-acid chain: Ribosome-binding factor A (125 aa).

This sequence belongs to the RbfA family. As to quaternary structure, monomer. Binds 30S ribosomal subunits, but not 50S ribosomal subunits or 70S ribosomes.

The protein resides in the cytoplasm. Its function is as follows. One of several proteins that assist in the late maturation steps of the functional core of the 30S ribosomal subunit. Associates with free 30S ribosomal subunits (but not with 30S subunits that are part of 70S ribosomes or polysomes). Required for efficient processing of 16S rRNA. May interact with the 5'-terminal helix region of 16S rRNA. This Thermosipho melanesiensis (strain DSM 12029 / CIP 104789 / BI429) protein is Ribosome-binding factor A.